Here is a 197-residue protein sequence, read N- to C-terminus: HTH-type transcriptional regulator BetI (197 aa).

The region spanning 8-68 (PIRRQQLIQA…ATMRHLMNAL (61 aa)) is the HTH tetR-type domain. Residues 31-50 (SIALIARLAGVSNGIISHYF) constitute a DNA-binding region (H-T-H motif).

The protein operates within amine and polyamine biosynthesis; betaine biosynthesis via choline pathway [regulation]. Repressor involved in the biosynthesis of the osmoprotectant glycine betaine. It represses transcription of the choline transporter BetT and the genes of BetAB involved in the synthesis of glycine betaine. This chain is HTH-type transcriptional regulator BetI, found in Pseudomonas syringae pv. tomato (strain ATCC BAA-871 / DC3000).